Consider the following 350-residue polypeptide: Lipoyl synthase (350 aa).

The disordered stretch occupies residues 1–39 (MSDTSSPKPVASGEKFRTAQGITAIKDGQKRRASAEPQV). The [4Fe-4S] cluster site is built by C73, C78, C84, C99, C103, C106, and S314. Positions 85 to 303 (WSNGTATIML…RDIGLEKGFM (219 aa)) constitute a Radical SAM core domain.

It belongs to the radical SAM superfamily. Lipoyl synthase family. Requires [4Fe-4S] cluster as cofactor.

The protein resides in the cytoplasm. The enzyme catalyses [[Fe-S] cluster scaffold protein carrying a second [4Fe-4S](2+) cluster] + N(6)-octanoyl-L-lysyl-[protein] + 2 oxidized [2Fe-2S]-[ferredoxin] + 2 S-adenosyl-L-methionine + 4 H(+) = [[Fe-S] cluster scaffold protein] + N(6)-[(R)-dihydrolipoyl]-L-lysyl-[protein] + 4 Fe(3+) + 2 hydrogen sulfide + 2 5'-deoxyadenosine + 2 L-methionine + 2 reduced [2Fe-2S]-[ferredoxin]. It participates in protein modification; protein lipoylation via endogenous pathway; protein N(6)-(lipoyl)lysine from octanoyl-[acyl-carrier-protein]: step 2/2. Catalyzes the radical-mediated insertion of two sulfur atoms into the C-6 and C-8 positions of the octanoyl moiety bound to the lipoyl domains of lipoate-dependent enzymes, thereby converting the octanoylated domains into lipoylated derivatives. This Ectopseudomonas mendocina (strain ymp) (Pseudomonas mendocina) protein is Lipoyl synthase.